The chain runs to 98 residues: uncharacterized protein (98 aa).

It belongs to the HesB/IscA family.

This is an uncharacterized protein from Staphylococcus aureus (strain USA300).